The following is an 840-amino-acid chain: Recyclin-1 (840 aa).

Residues Met-1–Leu-48 enclose the F-box domain. The residue at position 409 (Ser-409) is a Phosphoserine.

Interacts with SKP1.

It is found in the cytoplasm. Its subcellular location is the bud neck. The protein resides in the cell tip. Its function is as follows. Involved in recycling plasma membrane proteins internalized by endocytosis. Required for recycling of the v-SNARE SNC1. The polypeptide is Recyclin-1 (RCY1) (Saccharomyces cerevisiae (strain ATCC 204508 / S288c) (Baker's yeast)).